The sequence spans 44 residues: Peptide Hact-4 (44 aa).

3 disulfide bridges follow: Cys-8–Cys-42, Cys-15–Cys-34, and Cys-20–Cys-43.

Expressed in tentacles.

The protein resides in the nematocyst. The protein localises to the secreted. In terms of biological role, peptide with unknown function. Does not exhibit antimicrobial activity against Escherichia coli and Staphylococcus aureus. Does not exhibit any effect on human ion channel TRPV1 in a Xenopus laevis oocytes assay. The sequence is that of Peptide Hact-4 from Heliofungia actiniformis (Mushroom coral).